The sequence spans 580 residues: N(6)-adenosine-methyltransferase catalytic subunit METTL3 (580 aa).

Residues 1-70 (MSDTWSSIQA…PKPSTTSVAP (70 aa)) form a disordered region. At serine 2 the chain carries N-acetylserine; alternate. Serine 2 carries the phosphoserine; alternate modification. Over residues 28–37 (QDSGHLDLRN) the composition is skewed to basic and acidic residues. A phosphoserine mark is found at serine 43, serine 48, and serine 50. A compositionally biased stretch (low complexity) spans 55-67 (APTSSGPKPSTTS). Residues lysine 177, lysine 211, lysine 212, and lysine 215 each participate in a glycyl lysine isopeptide (Lys-Gly) (interchain with G-Cter in SUMO1) cross-link. The segment at 198–217 (LASSASEPAKEPAKKSRKHA) is disordered. Positions 210 to 215 (AKKSRK) match the Nuclear localization signal motif. A phosphoserine mark is found at serine 219, serine 243, and serine 350. S-adenosyl-L-methionine contacts are provided by residues 377–378 (DI) and aspartate 395. The segment at 396-410 (PPWDIHMELPYGTLT) is gate loop 1. Interaction with METTL14 regions lie at residues 450–454 (ERVDE) and 464–480 (QRII…NHGK). The segment at 462–479 (QLQRIIRTGRTGHWLNHG) is interphase loop. Positions 465 to 478 (RIIRTGRTGHWLNH) are positively charged region required for RNA-binding. The segment at 507–515 (VRSTSHKPD) is gate loop 2. Residues lysine 513, 536–539 (RPHN), and 549–550 (NQ) each bind S-adenosyl-L-methionine.

The protein belongs to the MT-A70-like family. Heterodimer; heterodimerizes with METTL14 to form an antiparallel heterodimer that constitutes an active methyltransferase. Component of the WMM complex, a N6-methyltransferase complex composed of a catalytic subcomplex, named MAC, and of an associated subcomplex, named MACOM. The MAC subcomplex is composed of METTL3 and METTL14. The MACOM subcomplex is composed of WTAP, ZC3H13, CBLL1/HAKAI, VIRMA, and, in some cases of RBM15 (RBM15 or RBM15B). Interacts with NCBP1/CBP80. Interacts with EIF4E. Interacts with EIF3B. In terms of processing, sumoylation inhibits the N6-adenosine-methyltransferase activity. Sumoylation does not affect subcellular location or interaction with METTL14. Desumoylated by SENP1. Present in both germ cells and somatic cells during testis development (at protein level).

It is found in the nucleus. The protein localises to the nucleus speckle. It localises to the cytoplasm. It carries out the reaction an adenosine in mRNA + S-adenosyl-L-methionine = an N(6)-methyladenosine in mRNA + S-adenosyl-L-homocysteine + H(+). Its activity is regulated as follows. Methyltransferase activity is regulated by miRNAs via a sequence pairing mechanism. Methyltransferase activity is inhibited by sumoylation. The METTL3-METTL14 heterodimer forms a N6-methyltransferase complex that methylates adenosine residues at the N(6) position of some RNAs and regulates various processes such as the circadian clock, differentiation of embryonic and hematopoietic stem cells, cortical neurogenesis, response to DNA damage, differentiation of T-cells and primary miRNA processing. In the heterodimer formed with METTL14, METTL3 constitutes the catalytic core. N6-methyladenosine (m6A), which takes place at the 5'-[AG]GAC-3' consensus sites of some mRNAs, plays a role in mRNA stability, processing, translation efficiency and editing. M6A acts as a key regulator of mRNA stability: methylation is completed upon the release of mRNA into the nucleoplasm and promotes mRNA destabilization and degradation. In embryonic stem cells (ESCs), m6A methylation of mRNAs encoding key naive pluripotency-promoting transcripts results in transcript destabilization, promoting differentiation of ESCs. M6A regulates the length of the circadian clock: acts as an early pace-setter in the circadian loop by putting mRNA production on a fast-track for facilitating nuclear processing, thereby providing an early point of control in setting the dynamics of the feedback loop. M6A also regulates circadian regulation of hepatic lipid metabolism. M6A regulates spermatogonial differentiation and meiosis and is essential for male fertility and spermatogenesis. Also required for oogenesis. Involved in the response to DNA damage: in response to ultraviolet irradiation, METTL3 rapidly catalyzes the formation of m6A on poly(A) transcripts at DNA damage sites, leading to the recruitment of POLK to DNA damage sites. M6A is also required for T-cell homeostasis and differentiation: m6A methylation of transcripts of SOCS family members (SOCS1, SOCS3 and CISH) in naive T-cells promotes mRNA destabilization and degradation, promoting T-cell differentiation. Inhibits the type I interferon response by mediating m6A methylation of IFNB. M6A also regulates cortical neurogenesis: m6A methylation of transcripts related to transcription factors, neural stem cells, the cell cycle and neuronal differentiation during brain development promotes their destabilization and decay, promoting differentiation of radial glial cells. M6A also takes place in other RNA molecules, such as primary miRNA (pri-miRNAs). Mediates m6A methylation of Xist RNA, thereby participating in random X inactivation: m6A methylation of Xist leads to target YTHDC1 reader on Xist and promote transcription repression activity of Xist. METTL3 mediates methylation of pri-miRNAs, marking them for recognition and processing by DGCR8. Acts as a positive regulator of mRNA translation independently of the methyltransferase activity: promotes translation by interacting with the translation initiation machinery in the cytoplasm. The chain is N(6)-adenosine-methyltransferase catalytic subunit METTL3 from Mus musculus (Mouse).